The chain runs to 417 residues: Aminoacyltransferase FemB (417 aa).

Belongs to the FemABX family.

It is found in the cytoplasm. The catalysed reaction is MurNAc-L-Ala-D-isoglutaminyl-L-Lys-(N(6)-tri-Gly)-D-Ala-D-Ala-diphospho-di-trans,octa-cis-undecaprenyl-GlcNAc + 2 glycyl-tRNA(Gly) = MurNAc-L-Ala-D-isoglutaminyl-L-Lys-(N(6)-penta-Gly)-D-Ala-D-Ala-diphospho-di-trans,octa-cis-undecaprenyl-GlcNAc + 2 tRNA(Gly) + 2 H(+). Catalyzes the incorporation of amino acid(s) into the interchain peptide bridge of peptidoglycan, using aminoacyl-tRNA as amino acid donor. The chain is Aminoacyltransferase FemB (femB) from Staphylococcus epidermidis (strain ATCC 35984 / DSM 28319 / BCRC 17069 / CCUG 31568 / BM 3577 / RP62A).